A 943-amino-acid polypeptide reads, in one-letter code: uncharacterized protein (943 aa).

Met-1 is subject to N-acetylmethionine. Disordered regions lie at residues 37–63, 152–177, 315–381, 397–472, and 515–546; these read DETP…QQQQ, KHQF…DDEV, LPMN…QQLQ, QNVP…PLKK, and EREA…ESDD. Residues 41–58 show a composition bias toward polar residues; sequence ISRNGNDSNINIQPSSVP. Residues 152 to 162 are compositionally biased toward basic residues; it reads KHQFGKSKKNT. The span at 318-358 shows a compositional bias: polar residues; it reads NNYNNHPGQFQNTPPVMPSGQQPPQQPRTLSLTNGPRYSPQ. A compositionally biased stretch (low complexity) spans 367-381; it reads QQISQRQQQQQQQLQ. The span at 397 to 409 shows a compositional bias: polar residues; the sequence is QNVPQGFNPWSPN. Positions 417–433 are enriched in low complexity; the sequence is SMKQPISQSSISSKNNS. Residues 434 to 470 are compositionally biased toward polar residues; it reads AYSIPNVQNNSLTTFSPSSPTDATAMPNSTKQGSSPL. Positions 515–533 are enriched in basic and acidic residues; the sequence is EREALVEEKEKERAEKNTE. Phosphoserine occurs at positions 553, 586, and 619. The disordered stretch occupies residues 616–639; sequence EFPSPGKYNSNSDNGEMNTTNEVD. A compositionally biased stretch (polar residues) spans 622–639; the sequence is KYNSNSDNGEMNTTNEVD. Ser-649 is subject to Phosphoserine. Positions 654-683 are disordered; that stretch reads IPERDPKRNVSDATIKRRESDGNGRRLSNV. The span at 655–677 shows a compositional bias: basic and acidic residues; sequence PERDPKRNVSDATIKRRESDGNG. 3 positions are modified to phosphoserine: Ser-681, Ser-766, and Ser-771.

This is an uncharacterized protein from Saccharomyces cerevisiae (strain ATCC 204508 / S288c) (Baker's yeast).